The sequence spans 202 residues: Recombination protein RecR (202 aa).

The C4-type zinc-finger motif lies at 58 to 73; it reads CANCGNLTDKKLCDIC. The Toprim domain maps to 81 to 178; sequence SVITVVEDSM…KVSRIAMGVP (98 aa).

The protein belongs to the RecR family.

May play a role in DNA repair. It seems to be involved in an RecBC-independent recombinational process of DNA repair. It may act with RecF and RecO. The chain is Recombination protein RecR from Finegoldia magna (strain ATCC 29328 / DSM 20472 / WAL 2508) (Peptostreptococcus magnus).